A 315-amino-acid chain; its full sequence is Methionyl-tRNA formyltransferase (315 aa).

113–116 is a binding site for (6S)-5,6,7,8-tetrahydrofolate; that stretch reads SLLP.

This sequence belongs to the Fmt family.

The catalysed reaction is L-methionyl-tRNA(fMet) + (6R)-10-formyltetrahydrofolate = N-formyl-L-methionyl-tRNA(fMet) + (6S)-5,6,7,8-tetrahydrofolate + H(+). In terms of biological role, attaches a formyl group to the free amino group of methionyl-tRNA(fMet). The formyl group appears to play a dual role in the initiator identity of N-formylmethionyl-tRNA by promoting its recognition by IF2 and preventing the misappropriation of this tRNA by the elongation apparatus. The sequence is that of Methionyl-tRNA formyltransferase from Salmonella enteritidis PT4 (strain P125109).